A 244-amino-acid chain; its full sequence is 2-C-methyl-D-erythritol 4-phosphate cytidylyltransferase (244 aa).

The protein belongs to the IspD/TarI cytidylyltransferase family. IspD subfamily.

It carries out the reaction 2-C-methyl-D-erythritol 4-phosphate + CTP + H(+) = 4-CDP-2-C-methyl-D-erythritol + diphosphate. It participates in isoprenoid biosynthesis; isopentenyl diphosphate biosynthesis via DXP pathway; isopentenyl diphosphate from 1-deoxy-D-xylulose 5-phosphate: step 2/6. Functionally, catalyzes the formation of 4-diphosphocytidyl-2-C-methyl-D-erythritol from CTP and 2-C-methyl-D-erythritol 4-phosphate (MEP). The sequence is that of 2-C-methyl-D-erythritol 4-phosphate cytidylyltransferase from Solibacter usitatus (strain Ellin6076).